The chain runs to 625 residues: Zinc finger protein 652-A (625 aa).

Positions F80–K255 are disordered. Residues R82–S100 are compositionally biased toward basic and acidic residues. Acidic residues predominate over residues G101–E127. A compositionally biased stretch (basic and acidic residues) spans K150–S166. The span at D167–N186 shows a compositional bias: acidic residues. Residues P240–K255 are compositionally biased toward basic and acidic residues. Residues L258–H281 form a C2H2-type 1 zinc finger. The C2H2-type 2; degenerate zinc-finger motif lies at Q285 to D307. C2H2-type zinc fingers lie at residues I312–H335, F342–H364, F370–H392, F398–H420, F426–H448, and F454–H476. A C2H2-type 9; degenerate zinc finger spans residues Y482–F505.

It belongs to the krueppel C2H2-type zinc-finger protein family.

Its subcellular location is the nucleus. In terms of biological role, may be involved in transcriptional regulation. The chain is Zinc finger protein 652-A (znf652-a) from Xenopus laevis (African clawed frog).